We begin with the raw amino-acid sequence, 877 residues long: DNA polymerase I (877 aa).

Residues 180-272 (TPSQFIDLKA…GLEDTLLKEK (93 aa)) enclose the 5'-3' exonuclease domain. The 157-residue stretch at 312-468 (FEIVTDKSSV…AKEKMMAELI (157 aa)) folds into the 3'-5' exonuclease domain.

The protein belongs to the DNA polymerase type-A family. Single-chain monomer with multiple functions.

The enzyme catalyses DNA(n) + a 2'-deoxyribonucleoside 5'-triphosphate = DNA(n+1) + diphosphate. In terms of biological role, in addition to polymerase activity, this DNA polymerase exhibits 3'-5' and 5'-3' exonuclease activity. The chain is DNA polymerase I (polA) from Lactococcus lactis subsp. cremoris (strain MG1363).